Consider the following 318-residue polypeptide: Methionyl-tRNA formyltransferase (318 aa).

112-115 (SILP) serves as a coordination point for (6S)-5,6,7,8-tetrahydrofolate.

Belongs to the Fmt family.

The catalysed reaction is L-methionyl-tRNA(fMet) + (6R)-10-formyltetrahydrofolate = N-formyl-L-methionyl-tRNA(fMet) + (6S)-5,6,7,8-tetrahydrofolate + H(+). Its function is as follows. Attaches a formyl group to the free amino group of methionyl-tRNA(fMet). The formyl group appears to play a dual role in the initiator identity of N-formylmethionyl-tRNA by promoting its recognition by IF2 and preventing the misappropriation of this tRNA by the elongation apparatus. This chain is Methionyl-tRNA formyltransferase, found in Shewanella sp. (strain MR-7).